We begin with the raw amino-acid sequence, 91 residues long: Large ribosomal subunit protein eL43 (91 aa).

The C4-type zinc-finger motif lies at Cys39–Cys60.

This sequence belongs to the eukaryotic ribosomal protein eL43 family.

The chain is Large ribosomal subunit protein eL43 (rpl-37a) from Ostertagia ostertagi (Brown stomach worm).